The chain runs to 131 residues: Small ribosomal subunit protein uS8 (131 aa).

Belongs to the universal ribosomal protein uS8 family. As to quaternary structure, part of the 30S ribosomal subunit. Contacts proteins S5 and S12.

Its function is as follows. One of the primary rRNA binding proteins, it binds directly to 16S rRNA central domain where it helps coordinate assembly of the platform of the 30S subunit. The sequence is that of Small ribosomal subunit protein uS8 from Paraburkholderia xenovorans (strain LB400).